Here is a 509-residue protein sequence, read N- to C-terminus: Protein MAIN-LIKE 1 (509 aa).

The interval 477–509 (GYGKRRRRNEHTPTPNNGGGNDISSLLLQKEDS) is disordered. Residues 488-503 (TPTPNNGGGNDISSLL) are compositionally biased toward polar residues.

In terms of tissue distribution, expressed in root tips, the shoot apical meristem (SAM), leaves, mature flowers and embryos.

The protein resides in the nucleus. In terms of biological role, acts as an important factor for cell fate determination and maintenance throughout plant development. Required for the organization of the root apical meristem (RAM) and the shoot apical meristem (SAM). Required to maintain genome stability and cell division activity in meristematic cells. The protein is Protein MAIN-LIKE 1 of Arabidopsis thaliana (Mouse-ear cress).